Consider the following 1676-residue polypeptide: Protein TIC 214 (1676 aa).

A run of 6 helical transmembrane segments spans residues Lys24–Leu44, Leu70–Phe90, Pro93–Leu113, Leu130–Phe150, Met170–Cys190, and Phe218–Leu238. 2 stretches are compositionally biased toward basic and acidic residues: residues Leu264 to Thr276 and Ser283 to Glu298. 4 disordered regions span residues Leu264–Glu302, Leu546–Ile610, Asn1123–Leu1151, and Gln1372–Asp1436. Residues Asp562–Thr586 are compositionally biased toward polar residues. Over residues Thr597–Ile610 the composition is skewed to basic and acidic residues. The segment covering Asn1123–Leu1138 has biased composition (polar residues). The span at Gln1372–Lys1390 shows a compositional bias: low complexity. Positions Glu1384 to Asp1436 form a coiled coil. Composition is skewed to basic and acidic residues over residues Asn1391–Glu1402 and Thr1409–Glu1426.

This sequence belongs to the TIC214 family. As to quaternary structure, part of the Tic complex.

It is found in the plastid. The protein resides in the chloroplast inner membrane. Involved in protein precursor import into chloroplasts. May be part of an intermediate translocation complex acting as a protein-conducting channel at the inner envelope. In Cuscuta obtusiflora (Peruvian dodder), this protein is Protein TIC 214.